Reading from the N-terminus, the 375-residue chain is Platelet-derived growth factor receptor-like protein (375 aa).

The first 21 residues, 1–21 (MKFWLLLGLLLLHEALEDVAG), serve as a signal peptide directing secretion. The interval 20 to 63 (AGQHSPKNKRPKEQGENRIKPTNKKAKPKIPKVKDRDSTDSTAK) is disordered. Residues 40-50 (PTNKKAKPKIP) show a composition bias toward basic residues. Residues 47-159 (PKIPKVKDRD…GYICRRDEAK (113 aa)) enclose the Ig-like C2-type 1 domain. Residues C96 and C143 are joined by a disulfide bond. A glycan (N-linked (GlcNAc...) asparagine) is linked at N219. In terms of domain architecture, Ig-like C2-type 2 spans 272–375 (PSTTILASSN…TTVATTVEFS (104 aa)). Cysteines 293 and 357 form a disulfide.

In terms of assembly, forms a complex composed of PDGFRL, TNK2 and GRB2.

The protein localises to the secreted. The sequence is that of Platelet-derived growth factor receptor-like protein (Pdgfrl) from Mus musculus (Mouse).